The chain runs to 436 residues: Trigger factor (436 aa).

A PPIase FKBP-type domain is found at 164 to 249 (GDTVVIDYKG…IHEIKEKQLP (86 aa)).

This sequence belongs to the FKBP-type PPIase family. Tig subfamily.

The protein localises to the cytoplasm. It carries out the reaction [protein]-peptidylproline (omega=180) = [protein]-peptidylproline (omega=0). In terms of biological role, involved in protein export. Acts as a chaperone by maintaining the newly synthesized protein in an open conformation. Functions as a peptidyl-prolyl cis-trans isomerase. The protein is Trigger factor of Limosilactobacillus reuteri (strain DSM 20016) (Lactobacillus reuteri).